Consider the following 206-residue polypeptide: Isochorismatase family protein 1A (206 aa).

It belongs to the isochorismatase family.

This is Isochorismatase family protein 1A from Dictyostelium discoideum (Social amoeba).